The sequence spans 86 residues: Toxin Aam2 (86 aa).

An N-terminal signal peptide occupies residues Met-1–Gly-20. In terms of domain architecture, LCN-type CS-alpha/beta spans Arg-22–Asn-84. Intrachain disulfides connect Cys-32–Cys-83, Cys-36–Cys-56, Cys-42–Cys-66, and Cys-46–Cys-68. Asn-84 carries the post-translational modification Asparagine amide.

This sequence belongs to the long (4 C-C) scorpion toxin superfamily. Sodium channel inhibitor family. Alpha subfamily. Expressed by the venom gland.

The protein localises to the secreted. Its function is as follows. Alpha toxins bind voltage-independently at site-3 of sodium channels (Nav) and inhibit the inactivation of the activated channels, thereby blocking neuronal transmission. In Androctonus amoreuxi (African fattail scorpion), this protein is Toxin Aam2.